A 704-amino-acid chain; its full sequence is Neutral ceramidase (704 aa).

A signal peptide spans 1–23 (MANSKMAFLAFLAVSFLCGLVSA). An N-linked (GlcNAc...) asparagine glycan is attached at Asn-230. The Nucleophile role is filled by Ser-276. 3 N-linked (GlcNAc...) asparagine glycosylation sites follow: Asn-362, Asn-550, and Asn-598.

Belongs to the neutral ceramidase family. Post-translationally, N-glycosylated. Widely expressed in different tissues but enriched in neurons at all stages of development.

The protein localises to the secreted. The catalysed reaction is an N-acylsphing-4-enine + H2O = sphing-4-enine + a fatty acid. Functionally, hydrolyzes the sphingolipid ceramide into sphingosine and free fatty acid at an optimal pH of 6.5-7.5. Acts as a key regulator of sphingolipid signaling metabolites by generating sphingosine at the cell surface. Regulates synaptic vesicle exocytosis and trafficking by controlling presynaptic terminal sphingolipid composition. This Drosophila melanogaster (Fruit fly) protein is Neutral ceramidase (CDase).